The sequence spans 264 residues: Phosphonates import ATP-binding protein PhnC (264 aa).

One can recognise an ABC transporter domain in the interval 3 to 246 (IRLQEAGLRH…MLDALYANEQ (244 aa)). 35-42 (GPSGAGKS) is an ATP binding site.

Belongs to the ABC transporter superfamily. Phosphonates importer (TC 3.A.1.9.1) family. In terms of assembly, the complex is composed of two ATP-binding proteins (PhnC), two transmembrane proteins (PhnE) and a solute-binding protein (PhnD).

It localises to the cell inner membrane. The catalysed reaction is phosphonate(out) + ATP + H2O = phosphonate(in) + ADP + phosphate + H(+). Functionally, part of the ABC transporter complex PhnCDE involved in phosphonates import. Responsible for energy coupling to the transport system. In Pseudomonas entomophila (strain L48), this protein is Phosphonates import ATP-binding protein PhnC.